The sequence spans 404 residues: Alpha-galactosidase A (404 aa).

The signal sequence occupies residues 1 to 23; the sequence is MRKQLLLGLGLVSALLVSVQASA. 2 cysteine pairs are disulfide-bonded: Cys-45/Cys-77 and Cys-124/Cys-154. The active-site Nucleophile is Asp-152. Position 185-189 (185-189) interacts with substrate; sequence EWGDN. Catalysis depends on Asp-207, which acts as the Proton donor.

The protein belongs to the glycosyl hydrolase 27 family.

The enzyme catalyses Hydrolysis of terminal, non-reducing alpha-D-galactose residues in alpha-D-galactosides, including galactose oligosaccharides, galactomannans and galactolipids.. Functionally, hydrolyzes galactomannan found in plant cell wall, by cleaving alpha-1,6-D-galactose side-chains from the mannan backbone. Appears to act in synergy with mannanase (ManA) to elicit hydrolysis of galactomannan. Has greater activity against galactomannans with decreased degree of polymerisation values. To a lesser extent, is also able to degrade other galactosides containing alpha-1,6-linked D-galactose, such as melibiose and stachyose. The protein is Alpha-galactosidase A (agaA) of Cellvibrio japonicus (strain Ueda107) (Pseudomonas fluorescens subsp. cellulosa).